The following is a 230-amino-acid chain: Orotidine 5'-phosphate decarboxylase (230 aa).

Substrate contacts are provided by residues aspartate 10, lysine 31, aspartate 58–threonine 67, threonine 117, arginine 179, glutamine 188, glycine 208, and arginine 209. Lysine 60 serves as the catalytic Proton donor.

Belongs to the OMP decarboxylase family. Type 1 subfamily. In terms of assembly, homodimer.

It catalyses the reaction orotidine 5'-phosphate + H(+) = UMP + CO2. Its pathway is pyrimidine metabolism; UMP biosynthesis via de novo pathway; UMP from orotate: step 2/2. Functionally, catalyzes the decarboxylation of orotidine 5'-monophosphate (OMP) to uridine 5'-monophosphate (UMP). This Staphylococcus epidermidis (strain ATCC 12228 / FDA PCI 1200) protein is Orotidine 5'-phosphate decarboxylase.